We begin with the raw amino-acid sequence, 75 residues long: ATP synthase subunit c (75 aa).

2 helical membrane-spanning segments follow: residues 13–33 and 55–75; these read LSVI…GILF and FIGL…ALII.

Belongs to the ATPase C chain family. F-type ATPases have 2 components, F(1) - the catalytic core - and F(0) - the membrane proton channel. F(1) has five subunits: alpha(3), beta(3), gamma(1), delta(1), epsilon(1). F(0) has three main subunits: a(1), b(2) and c(10-14). The alpha and beta chains form an alternating ring which encloses part of the gamma chain. F(1) is attached to F(0) by a central stalk formed by the gamma and epsilon chains, while a peripheral stalk is formed by the delta and b chains.

The protein localises to the cell membrane. Functionally, f(1)F(0) ATP synthase produces ATP from ADP in the presence of a proton or sodium gradient. F-type ATPases consist of two structural domains, F(1) containing the extramembraneous catalytic core and F(0) containing the membrane proton channel, linked together by a central stalk and a peripheral stalk. During catalysis, ATP synthesis in the catalytic domain of F(1) is coupled via a rotary mechanism of the central stalk subunits to proton translocation. In terms of biological role, key component of the F(0) channel; it plays a direct role in translocation across the membrane. A homomeric c-ring of between 10-14 subunits forms the central stalk rotor element with the F(1) delta and epsilon subunits. This Bifidobacterium longum (strain DJO10A) protein is ATP synthase subunit c.